We begin with the raw amino-acid sequence, 279 residues long: Borealin (279 aa).

The segment covering 135–152 (KTKAKVAAKKPSTARKTR) has biased composition (basic residues). The tract at residues 135 to 180 (KTKAKVAAKKPSTARKTRASTANLTNTSKRTSKRGRATPSASKQIE) is disordered. Over residues 153–163 (ASTANLTNTSK) the composition is skewed to polar residues.

It belongs to the borealin family. In terms of assembly, component of the CPC at least composed of survivin/birc5, incenp, cdca8/borealin and/or cdca9/dasra-A, and aurkb/aurora-B. Interacts with incenp (via N-terminus).

It localises to the nucleus. The protein localises to the chromosome. It is found in the centromere. The protein resides in the cytoplasm. Its subcellular location is the cytoskeleton. It localises to the spindle. In terms of biological role, component of the chromosomal passenger complex (CPC), a complex that acts as a key regulator of mitosis. The CPC complex has essential functions at the centromere in ensuring correct chromosome alignment and segregation and is required for chromatin-induced microtubule stabilization and spindle assembly. Contributes to CPC function by facilitating loading of the CPC onto chromosomes. This is Borealin (cdca8) from Xenopus tropicalis (Western clawed frog).